We begin with the raw amino-acid sequence, 93 residues long: YcgL domain-containing protein VIBHAR_01387 (93 aa).

One can recognise a YcgL domain in the interval 1 to 84 (MLCSIYKSSR…PPENLLEKYK (84 aa)).

This chain is YcgL domain-containing protein VIBHAR_01387, found in Vibrio campbellii (strain ATCC BAA-1116).